A 368-amino-acid chain; its full sequence is tRNA-specific 2-thiouridylase MnmA (368 aa).

ATP contacts are provided by residues 11–18 (GMSGGVDS) and M37. Residues 97–99 (NPD) are interaction with target base in tRNA. The Nucleophile role is filled by C102. The cysteines at positions 102 and 199 are disulfide-linked. ATP is bound at residue G127. The tract at residues 149-151 (KDQ) is interaction with tRNA. The Cysteine persulfide intermediate role is filled by C199. The tract at residues 311-312 (RY) is interaction with tRNA.

It belongs to the MnmA/TRMU family. In terms of assembly, interacts with TusE.

It localises to the cytoplasm. The enzyme catalyses S-sulfanyl-L-cysteinyl-[protein] + uridine(34) in tRNA + AH2 + ATP = 2-thiouridine(34) in tRNA + L-cysteinyl-[protein] + A + AMP + diphosphate + H(+). Functionally, catalyzes the 2-thiolation of uridine at the wobble position (U34) of tRNA(Lys), tRNA(Glu) and tRNA(Gln), leading to the formation of s(2)U34, the first step of tRNA-mnm(5)s(2)U34 synthesis. Sulfur is provided by IscS, via a sulfur-relay system. Binds ATP and its substrate tRNAs. This Escherichia coli (strain SMS-3-5 / SECEC) protein is tRNA-specific 2-thiouridylase MnmA.